We begin with the raw amino-acid sequence, 226 residues long: Phosphoribosyl-dephospho-CoA transferase (226 aa).

Active-site residues include D148 and D150.

This sequence belongs to the MdcG family.

The enzyme catalyses apo-[malonate decarboxylase ACP] + 2'-(5''-triphospho-alpha-D-ribosyl)-3'-dephospho-CoA = holo-[malonate decarboxylase ACP] + diphosphate. In terms of biological role, transfers 2'-(5-triphosphoribosyl)-3'-dephosphocoenzyme-A to the apo-[acyl-carrier-protein] of the malonate decarboxylase to yield holo-[acyl-carrier-protein]. This chain is Phosphoribosyl-dephospho-CoA transferase, found in Bradyrhizobium diazoefficiens (strain JCM 10833 / BCRC 13528 / IAM 13628 / NBRC 14792 / USDA 110).